The following is a 266-amino-acid chain: RNA polymerase II subunit A C-terminal domain phosphatase ssu-72 (266 aa).

The tract at residues 1–31 is disordered; that stretch reads MSAVDTPTGAASSSKPDQNEQNGQNGGREDS. Residues 9–23 show a composition bias toward polar residues; it reads GAASSSKPDQNEQNG.

It belongs to the SSU72 phosphatase family. As to quaternary structure, component of the cleavage and polyadenylation factor (CPF) complex.

The protein localises to the nucleus. It carries out the reaction O-phospho-L-seryl-[protein] + H2O = L-seryl-[protein] + phosphate. It catalyses the reaction O-phospho-L-threonyl-[protein] + H2O = L-threonyl-[protein] + phosphate. Functionally, processively dephosphorylates Ser-5 of the heptad repeats YSPTSPS in the C-terminal domain of the largest RNA polymerase II subunit (rpb-1). In terms of biological role, component of the cleavage and polyadenylation factor (CPF) complex, which plays a key role in polyadenylation-dependent pre-mRNA 3'-end formation and cooperates with cleavage factors including the CFIA complex and NAB4/CFIB. Ssu-72 is required for 3'-end formation of snoRNAs. This Neurospora crassa (strain ATCC 24698 / 74-OR23-1A / CBS 708.71 / DSM 1257 / FGSC 987) protein is RNA polymerase II subunit A C-terminal domain phosphatase ssu-72 (ssu-72).